The sequence spans 344 residues: Ion-translocating oxidoreductase complex subunit D (344 aa).

Transmembrane regions (helical) follow at residues 23–43, 44–64, 77–99, and 120–140; these read LVLGACVPGLLTLTWLYGPGT, LLNLAWASLVALACEAAMLAL, SALVTALLLAVALPPYAPWWLTL, and PFNPAMLGYVVALVSFPLEMT. Position 172 is an FMN phosphoryl threonine (Thr172). The next 5 helical transmembrane spans lie at 198 to 218, 222 to 242, 252 to 272, 285 to 305, and 306 to 326; these read LGSAGSEWVNLAFLLGGLFLL, LFTWHAPLGMLAGLFAMSLLF, GSPLFHLFSGATMLGAFFIVT, LVFGLGVGVLTYVIRAWGGYP, and DGMAFAVLLMNLAAPTIDYYT.

Belongs to the NqrB/RnfD family. As to quaternary structure, the complex is composed of six subunits: RnfA, RnfB, RnfC, RnfD, RnfE and RnfG. Requires FMN as cofactor.

The protein localises to the cell inner membrane. Part of a membrane-bound complex that couples electron transfer with translocation of ions across the membrane. The sequence is that of Ion-translocating oxidoreductase complex subunit D from Pseudomonas aeruginosa (strain LESB58).